The sequence spans 110 residues: UPF0060 membrane protein Haur_1798 (110 aa).

The next 4 membrane-spanning stretches (helical) occupy residues 7-27 (VVLF…VWQW), 33-53 (SIWF…LPTL), 63-83 (VYAA…WLID), and 89-109 (QPSL…LYWP).

This sequence belongs to the UPF0060 family.

It is found in the cell membrane. This chain is UPF0060 membrane protein Haur_1798, found in Herpetosiphon aurantiacus (strain ATCC 23779 / DSM 785 / 114-95).